Consider the following 105-residue polypeptide: Large ribosomal subunit protein uL24 (105 aa).

The protein belongs to the universal ribosomal protein uL24 family. In terms of assembly, part of the 50S ribosomal subunit.

In terms of biological role, one of two assembly initiator proteins, it binds directly to the 5'-end of the 23S rRNA, where it nucleates assembly of the 50S subunit. Functionally, one of the proteins that surrounds the polypeptide exit tunnel on the outside of the subunit. The sequence is that of Large ribosomal subunit protein uL24 from Mycobacterium leprae (strain Br4923).